Here is an 803-residue protein sequence, read N- to C-terminus: Cation channel sperm-associated auxiliary subunit delta (803 aa).

An N-terminal signal peptide occupies residues Met-1–Ala-15. At Gln-16–Met-720 the chain is on the extracellular side. 7 disulfides stabilise this stretch: Cys-19–Cys-365, Cys-55–Cys-142, Cys-141–Cys-148, Cys-383–Cys-492, Cys-506–Cys-698, Cys-521–Cys-568, and Cys-620–Cys-648. 7 N-linked (GlcNAc...) asparagine glycosylation sites follow: Asn-226, Asn-418, Asn-436, Asn-468, Asn-534, Asn-545, and Asn-626. Residues Thr-721 to Lys-742 form a helical membrane-spanning segment. Over Gln-743–Lys-803 the chain is Cytoplasmic. Residues Ser-782–Lys-803 form a disordered region.

It belongs to the CATSPERD family. In terms of assembly, component of the CatSper complex or CatSpermasome composed of the core pore-forming members CATSPER1, CATSPER2, CATSPER3 and CATSPER4 as well as auxiliary members CATSPERB, CATSPERG, CATSPERD, CATSPERE, CATSPERZ, C2CD6/CATSPERT, SLCO6C1, TMEM249, TMEM262 and EFCAB9. HSPA1 may be an additional auxiliary complex member. The core complex members CATSPER1, CATSPER2, CATSPER3 and CATSPER4 form a heterotetrameric channel. The auxiliary CATSPERB, CATSPERG, CATSPERD and CATSPERE subunits form a pavilion-like structure over the pore which stabilizes the complex through interactions with CATSPER4, CATSPER3, CATSPER1 and CATSPER2 respectively. SLCO6C1 interacts with CATSPERE and TMEM262/CATSPERH interacts with CATSPERB, further stabilizing the complex. C2CD6/CATSPERT interacts at least with CATSPERD and is required for targeting the CatSper complex in the flagellar membrane.

The protein localises to the cell projection. Its subcellular location is the cilium. It is found in the flagellum membrane. Its function is as follows. Auxiliary component of the CatSper complex, a complex involved in sperm cell hyperactivation. Sperm cell hyperactivation is needed for sperm motility which is essential late in the preparation of sperm for fertilization. Required for CATSPER1 stability before intraflagellar transport and/or incorporation of the CatSper complex channel into the flagellar membrane. This Rattus norvegicus (Rat) protein is Cation channel sperm-associated auxiliary subunit delta.